A 103-amino-acid polypeptide reads, in one-letter code: Cystatin-A8 (103 aa).

The tract at residues 1-20 is disordered; that stretch reads MESEEMLAGGLTEPRPATPE. Residues 51-55 carry the Secondary area of contact motif; that stretch reads QVVAG.

Belongs to the cystatin family.

It localises to the cytoplasm. This is an intracellular thiol proteinase inhibitor. The chain is Cystatin-A8 from Sus scrofa (Pig).